Reading from the N-terminus, the 362-residue chain is 3-isopropylmalate dehydrogenase (362 aa).

78–91 provides a ligand contact to NAD(+); that stretch reads GYKWDSLPPHQRPE. The substrate site is built by Arg98, Arg108, Arg136, and Asp226. Positions 226, 250, and 254 each coordinate Mg(2+). 284 to 296 is a binding site for NAD(+); sequence GSAPDIAGLDKAN.

It belongs to the isocitrate and isopropylmalate dehydrogenases family. LeuB type 1 subfamily. Homodimer. The cofactor is Mg(2+). Mn(2+) serves as cofactor.

Its subcellular location is the cytoplasm. It catalyses the reaction (2R,3S)-3-isopropylmalate + NAD(+) = 4-methyl-2-oxopentanoate + CO2 + NADH. It functions in the pathway amino-acid biosynthesis; L-leucine biosynthesis; L-leucine from 3-methyl-2-oxobutanoate: step 3/4. Catalyzes the oxidation of 3-carboxy-2-hydroxy-4-methylpentanoate (3-isopropylmalate) to 3-carboxy-4-methyl-2-oxopentanoate. The product decarboxylates to 4-methyl-2 oxopentanoate. The sequence is that of 3-isopropylmalate dehydrogenase from Trichormus variabilis (strain ATCC 29413 / PCC 7937) (Anabaena variabilis).